We begin with the raw amino-acid sequence, 1393 residues long: Polarized growth protein RAX2 (1393 aa).

Residues 1 to 21 (MLVQFQQLLLLLISIIKLCQA) form the signal peptide. At 22 to 1329 (DDNDNSFFQP…TNKNLSRGKV (1308 aa)) the chain is on the extracellular side. 48 N-linked (GlcNAc...) asparagine glycosylation sites follow: Asn62, Asn85, Asn105, Asn125, Asn133, Asn139, Asn164, Asn186, Asn195, Asn212, Asn256, Asn260, Asn266, Asn269, Asn362, Asn398, Asn405, Asn479, Asn536, Asn542, Asn565, Asn599, Asn646, Asn649, Asn653, Asn674, Asn689, Asn696, Asn702, Asn714, Asn747, Asn764, Asn768, Asn792, Asn829, Asn863, Asn899, Asn935, Asn946, Asn958, Asn985, Asn1020, Asn1030, Asn1041, Asn1213, Asn1232, Asn1262, and Asn1323. A helical transmembrane segment spans residues 1330–1350 (VGISLACALGSTTLLGLLYII). The Cytoplasmic segment spans residues 1351–1393 (PYFALFKNRKDGYFQPERIHEDEMMDAVNPEDLLHEIDLQREK).

It belongs to the RAX2 family.

The protein localises to the cell membrane. It localises to the cell tip. In terms of biological role, required for establishing sites of emergence of yeast and hyphal daughters and for maintaining the linearity of hyphal growth, but not involved in responses that require a reorientation of the direction of already established hyphal growth (tropisms). Does not play a role in penetration or injury of human epithelial cells. The polypeptide is Polarized growth protein RAX2 (Candida albicans (strain SC5314 / ATCC MYA-2876) (Yeast)).